We begin with the raw amino-acid sequence, 823 residues long: Putative ankyrin repeat domain-containing protein 20A2 (823 aa).

ANK repeat units lie at residues glutamine 66–valine 95, glutamate 99–leucine 128, tyrosine 132–alanine 161, aspartate 165–alanine 194, and leucine 198–alanine 227. 2 disordered regions span residues valine 301 to aspartate 343 and valine 355 to asparagine 402. A compositionally biased stretch (basic and acidic residues) spans glutamine 372–glutamine 384. 3 coiled-coil regions span residues lysine 431–glutamate 480, glutamate 565–threonine 724, and leucine 776–glutamate 805.

This Homo sapiens (Human) protein is Putative ankyrin repeat domain-containing protein 20A2.